The sequence spans 609 residues: D-apionate lactonase (609 aa).

The enzyme catalyses D-apionolactone + H2O = D-apionate + H(+). Its pathway is carbohydrate metabolism. Involved in catabolism of D-apiose. Hydrolyzes D-apionolactone to D-apionate. The sequence is that of D-apionate lactonase from Brucella anthropi (strain ATCC 49188 / DSM 6882 / CCUG 24695 / JCM 21032 / LMG 3331 / NBRC 15819 / NCTC 12168 / Alc 37) (Ochrobactrum anthropi).